A 389-amino-acid chain; its full sequence is MTTSVCLLGASGSVGESTLKVLRAHPEKFRLHSFSVHSNLEKAKEIQKEFSPDFICVSSDFADVGVLGNKLGRTQILYGESSLCELVREPEVEIVITAIVGSVGLRPTIAAITAGKRLGIANKETLVTSGPLIQSLIAKHNTKVVPVDSEHNALFQLLESLNPNSVEKIILTASGGAFRDLPVEQLSSVTKEQALHHPTWNMGPKITIDSNGMINKGLEVIEAHFLFNVPYDKIGVVIHPQSIAHGIVELKDGASFLYASYPDMIFPIAHSLFHPEPVPKVLRSYPAKDWGKLEFREPDFKRYPGLGLAFEAGKVGGTAPCIFNAANEAAVELFLKDEIRFIEIPDYIRETLDEIKIEFPLSLEEYEEADRIARETVRNLKARKVVSAC.

Residues Ser-11, Gly-12, Ser-13, Val-14, Asn-39, and Asn-122 each contribute to the NADPH site. Residue Lys-123 coordinates 1-deoxy-D-xylulose 5-phosphate. Position 124 (Glu-124) interacts with NADPH. Position 148 (Asp-148) interacts with Mn(2+). 1-deoxy-D-xylulose 5-phosphate contacts are provided by Ser-149, Glu-150, Ser-174, and His-197. Glu-150 is a Mn(2+) binding site. Gly-203 serves as a coordination point for NADPH. 1-deoxy-D-xylulose 5-phosphate-binding residues include Ser-210, Asn-215, Lys-216, and Glu-219. Glu-219 provides a ligand contact to Mn(2+).

The protein belongs to the DXR family. The cofactor is Mg(2+). It depends on Mn(2+) as a cofactor.

The enzyme catalyses 2-C-methyl-D-erythritol 4-phosphate + NADP(+) = 1-deoxy-D-xylulose 5-phosphate + NADPH + H(+). It participates in isoprenoid biosynthesis; isopentenyl diphosphate biosynthesis via DXP pathway; isopentenyl diphosphate from 1-deoxy-D-xylulose 5-phosphate: step 1/6. Catalyzes the NADPH-dependent rearrangement and reduction of 1-deoxy-D-xylulose-5-phosphate (DXP) to 2-C-methyl-D-erythritol 4-phosphate (MEP). This chain is 1-deoxy-D-xylulose 5-phosphate reductoisomerase, found in Leptospira interrogans serogroup Icterohaemorrhagiae serovar Lai (strain 56601).